Consider the following 346-residue polypeptide: MTEPQGPLDTIPKVNYPPILTIANYFSTKQMIDQVISEDQDYVTWKLQNLRTGGTSINNQLNKYPKYKYQKTRINQQDPDSINKVPENLIFPQDILQQQTQNSNYEDTNTNEDENEKLAQDEQFKLLVTNLDKDQTNRFEVFHRTSLNKTQVKKLASTVANQTISENIRVFLQAVGKIYAGEIIELAMIVKNKWLTSQMCIEFDKRTKIGYKLKKYLKKLTFSIIENQQYKQDYQSDSVPEDEPDFYFDDEEVDKRETTLGNSLLQSKSLQQSDHNSQDLKLQLIEQYNKLVLQFNKLDVSIEKYNNSPLLPEHIREAWRLYRLQSDTLPNAYWRTQGEGQGSMFR.

The 199-residue stretch at 131 to 329 folds into the Histone-fold domain; it reads LDKDQTNRFE…RLYRLQSDTL (199 aa). 2 positions are modified to phosphoserine: S236 and S238.

It belongs to the TAF11 family. As to quaternary structure, TAF11 heterodimerizes with TAF13, but they do not seem to form a heterotetramer like TAF6/TAF9. The 1.2 MDa TFIID complex is composed of TATA binding protein (TBP) and the 14 TBP-associated factors (one copy of each TAF1, TAF2, TAF3, TAF7, TAF8, TAF11, TAF13, two copies of each TAF4, TAF5, TAF6, TAF9, TAF10, TAF12, and three copies of TAF14), ranging in size from 17 to 150 kDa.

It is found in the nucleus. Its function is as follows. Functions as a component of the DNA-binding general transcription factor complex TFIID. Binding of TFIID to a promoter (with or without TATA element) is the initial step in pre-initiation complex (PIC) formation. TFIID plays a key role in the regulation of gene expression by RNA polymerase II through different activities such as transcription activator interaction, core promoter recognition and selectivity, TFIIA and TFIIB interaction, chromatin modification (histone acetylation by TAF1), facilitation of DNA opening and initiation of transcription. This Saccharomyces cerevisiae (strain ATCC 204508 / S288c) (Baker's yeast) protein is Transcription initiation factor TFIID subunit 11 (TAF11).